Here is a 679-residue protein sequence, read N- to C-terminus: Glycine--tRNA ligase beta subunit (679 aa).

Belongs to the class-II aminoacyl-tRNA synthetase family. Tetramer of two alpha and two beta subunits.

Its subcellular location is the cytoplasm. It carries out the reaction tRNA(Gly) + glycine + ATP = glycyl-tRNA(Gly) + AMP + diphosphate. The chain is Glycine--tRNA ligase beta subunit from Streptococcus pyogenes serotype M3 (strain ATCC BAA-595 / MGAS315).